We begin with the raw amino-acid sequence, 306 residues long: tRNA dimethylallyltransferase (306 aa).

Residue 12–19 (GPTGTKKS) participates in ATP binding.

Belongs to the IPP transferase family. As to quaternary structure, monomer. Requires Mg(2+) as cofactor.

The enzyme catalyses adenosine(37) in tRNA + dimethylallyl diphosphate = N(6)-dimethylallyladenosine(37) in tRNA + diphosphate. Catalyzes the transfer of a dimethylallyl group onto the adenine at position 37 in tRNAs that read codons beginning with uridine, leading to the formation of N6-(dimethylallyl)adenosine (i(6)A). This is tRNA dimethylallyltransferase from Mycoplasmoides gallisepticum (strain R(low / passage 15 / clone 2)) (Mycoplasma gallisepticum).